Consider the following 188-residue polypeptide: Pro-adrenomedullin (188 aa).

Residues 1 to 21 (MKLVPVALLYLGSLAFLGADT) form the signal peptide. Position 41 is an arginine amide (R41). A propeptide spanning residues 45-92 (ELRVSSSYPTGLAEVKAGPAQTLIRTQDVKGASRNPQTSGPDAARIRV) is cleaved from the precursor. An intrachain disulfide couples C110 to C115. Residues 131-176 (DKDGVAPRSKISPQGYGRRRRRSLPEPGLRRTLLFPEPRPGGAPAP) form a disordered region. Y146 is modified (tyrosine amide). A propeptide spans 153-188 (SLPEPGLRRTLLFPEPRPGGAPAPRAHQVLANLLKM) (preproAM C-terminal fragment).

This sequence belongs to the adrenomedullin family.

The protein localises to the secreted. Functionally, adrenomedullin/ADM and proadrenomedullin N-20 terminal peptide/PAMP are peptide hormones that act as potent hypotensive and vasodilatator agents. Numerous actions have been reported most related to the physiologic control of fluid and electrolyte homeostasis. ADM function is mediated by the CALCRL-RAMP2 and CALCRL-RAMP3 receptor complexes with ADM showing the highest potency for the CALCRL-RAMP2 complex. In Canis lupus familiaris (Dog), this protein is Pro-adrenomedullin (ADM).